Reading from the N-terminus, the 401-residue chain is Sorting nexin-4 (401 aa).

Residues 17 to 139 form the PX domain; it reads FLQCLVTEPR…AFLENPNWNN (123 aa). Residues R60, S62, K86, and R105 each coordinate a 1,2-diacyl-sn-glycero-3-phospho-(1D-myo-inositol-3-phosphate). The residue at position 62 (S62) is a Phosphoserine. The stretch at 190-292 forms a coiled coil; the sequence is ISNLEGSIQK…DVEALQEYSA (103 aa).

Belongs to the sorting nexin family.

The protein resides in the cytoplasm. Its subcellular location is the cytosol. The protein localises to the preautophagosomal structure membrane. It is found in the endosome membrane. Its function is as follows. Sorting nexin, involved in the separation or division of vacuoles throughout the entire life cycle of the cells. Involved in retrieval of late-Golgi SNAREs from post-Golgi endosomes to the trans-Golgi network, for cytoplasm to vacuole transport (Cvt), and autophagy of large cargos including mitophagy, pexophagy and glycophagy. The protein is Sorting nexin-4 (snx4) of Schizosaccharomyces pombe (strain 972 / ATCC 24843) (Fission yeast).